The chain runs to 92 residues: Conotoxin Mr15.3 (92 aa).

A signal peptide spans 1–20 (MSTLKMMLLILLLLLPMATF). The propeptide occupies 21–53 (DSDGQAIPGGGIPSAVNSRVRGDEKSGRSLEKR).

It belongs to the conotoxin N superfamily. Post-translationally, contains 4 disulfide bonds. Expressed by the venom duct.

It is found in the secreted. In Conus marmoreus (Marble cone), this protein is Conotoxin Mr15.3.